The sequence spans 123 residues: UPF0342 protein LAR_1202 (123 aa).

The protein belongs to the UPF0342 family.

The protein is UPF0342 protein LAR_1202 of Limosilactobacillus reuteri subsp. reuteri (strain JCM 1112) (Lactobacillus reuteri).